A 389-amino-acid polypeptide reads, in one-letter code: Radial spoke head protein 3 homolog B (389 aa).

A disordered region spans residues 63–106 (PTGQVPGQPDPLELQRQQQARRRALARKRAQEQLKPRTPEPVEG). The segment covering 81–90 (QARRRALARK) has biased composition (basic residues). Basic and acidic residues predominate over residues 91 to 106 (RAQEQLKPRTPEPVEG). Thr143 is modified (phosphothreonine; by MAPK1). Positions 206-242 (YEEIRNVELAEVQRLEEQERRHREEKERRKKQQWEIV) form a coiled coil. The segment at 332–389 (EAMPPGQKTNVINGPNTVTDPSVTTLHTQKPVLDRVSSQPAPSQERKPVEEGGHLMAE) is disordered. Residues 338–359 (QKTNVINGPNTVTDPSVTTLHT) are compositionally biased toward polar residues. Basic and acidic residues predominate over residues 375-389 (QERKPVEEGGHLMAE).

Belongs to the flagellar radial spoke RSP3 family. As to quaternary structure, component of the axonemal radial spoke 1 (RS1) and 2 (RS2) complexes, at least composed of spoke head proteins RSPH1, RSPH3B, RSPH9 and the cilia-specific component RSPH4A or sperm-specific component RSPH6A, spoke stalk proteins RSPH14, DNAJB13, DYDC1, ROPN1L and NME5, and the RS1 complex-specific anchor protein IQUB. Interacts with IQUB. Interacts with phosphorylated MAPK1. Interacts with MEK1. Interacts with PKA regulatory subunits PRKAR1A and PRKAR1B. Interacts with RSPH1. Interacts with RSPH4A. Interacts with RSPH6A. Interacts with RSPH9. Interacts with LRRC23. As to expression, expressed in ependymal cells (at protein level).

It localises to the cytoplasm. It is found in the cytoskeleton. The protein resides in the cilium axoneme. The protein localises to the flagellum axoneme. Functionally, functions as part of axonemal radial spoke complexes that play an important part in the motility of sperm and cilia. Functions as a protein kinase A-anchoring protein that scaffolds the cAMP-dependent protein kinase holoenzyme. May serve as a point of convergence for MAPK and PKA signaling in cilia. The polypeptide is Radial spoke head protein 3 homolog B (Rsph3b) (Mus musculus (Mouse)).